A 67-amino-acid chain; its full sequence is DNA-directed RNA polymerase subunit omega (67 aa).

This sequence belongs to the RNA polymerase subunit omega family. The RNAP catalytic core consists of 2 alpha, 1 beta, 1 beta' and 1 omega subunit. When a sigma factor is associated with the core the holoenzyme is formed, which can initiate transcription.

The catalysed reaction is RNA(n) + a ribonucleoside 5'-triphosphate = RNA(n+1) + diphosphate. Functionally, promotes RNA polymerase assembly. Latches the N- and C-terminal regions of the beta' subunit thereby facilitating its interaction with the beta and alpha subunits. The chain is DNA-directed RNA polymerase subunit omega from Burkholderia ambifaria (strain ATCC BAA-244 / DSM 16087 / CCUG 44356 / LMG 19182 / AMMD) (Burkholderia cepacia (strain AMMD)).